Consider the following 714-residue polypeptide: MLGRLLRTSSLSEFVPFGSSNVTVGEEVFQNEPFYMTDDLKTLLYGTRDKALFERIANDRLHNGGFRLIISQELGHVTSRNNYQVVLDHSSVNFHTGAHIPLNELKDYIFGSSIRTIDYSASSDKIKVVKSANIVLFTRIFYLNEKSTLRIAISCCVTDDVLPVLTECWPHISSFLDQCENTLLKYLAKNDTQFLPHDWKARNCIEVAAVLQTFQRKIIPLLSGYSDTPRLFLYPMDSIPYIKTWVKYVTNWIELKDGPRVRFLPILLAKLRYDFASLLKENSNTRIVILTGNMNVANRLIFILTAFLGPHFRGTLHKSINSQGCPSPAGRKMSNMSGASDFPFELKPSNSSITETNKGWEIPRIKRDPTFSVTSVSSDETGVQTFIQPSSLKSGASSVQYLSSSLNSAYGSYGSWFKKVAQSPSSRSNESSHEVPPILHRNSSSTSFHQQAVLGNINGSQRVTPQPSPTIAEYEEYPWFSPSPIARDQPRPEKRIPTPISSYTTEKERRTHLQSEIYDVDMKRTVNRLIDEDSLNDAFADLVIDPPSYDTTVSNEKHGEIVEVNMASPRKQRNNQNQELLRRFTSYTPHYNQWFQLQACQITTESENKVIHSMKRDLTYADQDPCKKDKSTSTLLISLRSREIKQVTIVRDTNNRFIQRTKKILQNGKVGPVSRAMLSGIETTDQHLKKLMECNNDNEALVSLFNDIVTCAST.

A uDENN FNIP1/2-type domain is found at 61–236; it reads LHNGGFRLII…DTPRLFLYPM (176 aa). In terms of domain architecture, cDENN FNIP1/2-type spans 244 to 620; sequence TWVKYVTNWI…IHSMKRDLTY (377 aa). Positions 423–447 are disordered; that stretch reads SPSSRSNESSHEVPPILHRNSSSTS. The 79-residue stretch at 634–712 folds into the dDENN FNIP1/2-type domain; that stretch reads TLLISLRSRE…SLFNDIVTCA (79 aa).

It belongs to the LST4 family.

Functionally, involved in extracellular amino acid uptake. Required for the protein trafficking from the Golgi to the plasma membrane. The protein is Protein LST4 (LST4) of Kluyveromyces lactis (strain ATCC 8585 / CBS 2359 / DSM 70799 / NBRC 1267 / NRRL Y-1140 / WM37) (Yeast).